The following is a 1040-amino-acid chain: Multidrug resistance protein MdtB (1040 aa).

12 consecutive transmembrane segments (helical) span residues 25–45 (LLMA…PVAA), 347–367 (LMLA…NIPA), 369–389 (IIPG…MVFL), 396–416 (LTLM…IVVI), 440–460 (IGFT…PLLF), 472–492 (FAVT…TLTP), 537–557 (WLTL…WIVI), 863–883 (LGST…VLGV), 888–908 (FIHP…ALLA), 910–930 (IIAG…LIGI), 968–988 (ILMT…STGV), and 998–1018 (IAMV…TPVI).

This sequence belongs to the resistance-nodulation-cell division (RND) (TC 2.A.6) family. MdtB subfamily. Part of a tripartite efflux system composed of MdtA, MdtB and MdtC. MdtB forms a heteromultimer with MdtC.

It localises to the cell inner membrane. This Salmonella paratyphi A (strain ATCC 9150 / SARB42) protein is Multidrug resistance protein MdtB.